Consider the following 808-residue polypeptide: Phenylalanine--tRNA ligase beta subunit (808 aa).

A tRNA-binding domain is found at 40-155; the sequence is NQGATGVVVG…DDVEIGSDAL (116 aa). The region spanning 409-484 is the B5 domain; the sequence is IEEPVVSLNL…RLYGYDNIPT (76 aa). Mg(2+) contacts are provided by D462, D468, E471, and E472. The FDX-ACB domain maps to 714–807; that stretch reads PRFPAISRDI…LEASTGAVLR (94 aa).

Belongs to the phenylalanyl-tRNA synthetase beta subunit family. Type 1 subfamily. As to quaternary structure, tetramer of two alpha and two beta subunits. Mg(2+) serves as cofactor.

The protein resides in the cytoplasm. The enzyme catalyses tRNA(Phe) + L-phenylalanine + ATP = L-phenylalanyl-tRNA(Phe) + AMP + diphosphate + H(+). This is Phenylalanine--tRNA ligase beta subunit (pheT) from Halalkalibacterium halodurans (strain ATCC BAA-125 / DSM 18197 / FERM 7344 / JCM 9153 / C-125) (Bacillus halodurans).